A 139-amino-acid chain; its full sequence is Large-conductance mechanosensitive channel (139 aa).

Transmembrane regions (helical) follow at residues 19–39 and 81–101; these read VAVIIGAAFGAIVSSMVADVI and GNFLTLTLNFLIVAFVLFMVV.

This sequence belongs to the MscL family. Homopentamer.

It is found in the cell inner membrane. In terms of biological role, channel that opens in response to stretch forces in the membrane lipid bilayer. May participate in the regulation of osmotic pressure changes within the cell. The protein is Large-conductance mechanosensitive channel of Nitrobacter hamburgensis (strain DSM 10229 / NCIMB 13809 / X14).